The primary structure comprises 286 residues: 4-hydroxybenzoate octaprenyltransferase (286 aa).

7 helical membrane passes run 21–40, 96–116, 142–162, 167–187, 210–230, 235–255, and 266–286; these read GTLL…AGGM, LFVI…GLVV, FLGV…TGEV, WWLF…YAMV, QIIG…GWSA, LYGL…MLIF, and FLNN…DYLF.

This sequence belongs to the UbiA prenyltransferase family. Mg(2+) is required as a cofactor.

Its subcellular location is the cell inner membrane. It catalyses the reaction all-trans-octaprenyl diphosphate + 4-hydroxybenzoate = 4-hydroxy-3-(all-trans-octaprenyl)benzoate + diphosphate. It functions in the pathway cofactor biosynthesis; ubiquinone biosynthesis. Its function is as follows. Catalyzes the prenylation of para-hydroxybenzoate (PHB) with an all-trans polyprenyl group. Mediates the second step in the final reaction sequence of ubiquinone-8 (UQ-8) biosynthesis, which is the condensation of the polyisoprenoid side chain with PHB, generating the first membrane-bound Q intermediate 3-octaprenyl-4-hydroxybenzoate. This is 4-hydroxybenzoate octaprenyltransferase from Shewanella sp. (strain MR-4).